A 280-amino-acid chain; its full sequence is Probable cell division protein WhiA (280 aa).

The segment at residues 247–279 (SLEQIANFFFTKYNIKISRSGIQHFSVNLKKLC) is a DNA-binding region (H-T-H motif).

It belongs to the WhiA family.

Functionally, involved in cell division and chromosome segregation. The chain is Probable cell division protein WhiA from Mycoplasma genitalium (strain ATCC 33530 / DSM 19775 / NCTC 10195 / G37) (Mycoplasmoides genitalium).